The primary structure comprises 598 residues: CBP80/20-dependent translation initiation factor (598 aa).

An N-acetylmethionine modification is found at Met1. The segment covering 1–18 has biased composition (low complexity); sequence MENSSAASASSEAGSSRS. Disordered regions lie at residues 1–20, 43–90, and 180–336; these read MENS…RSQE, DKTE…SKDN, and IAHT…RIGE. Positions 1–305 are interaction with NCBP1/CBP80; sequence MENSSAASAS…APRSPDTLAP (305 aa). Ser18 carries the post-translational modification Phosphoserine. Over residues 43-55 the composition is skewed to basic and acidic residues; sequence DKTEGDGESERTQ. Over residues 56–75 the composition is skewed to polar residues; it reads SHISQWTADCSEPLDSSCSF. Residues 183-198 show a composition bias toward basic residues; it reads TKKLFRRRRNDRRRQQ. Residues 258 to 272 show a composition bias toward basic and acidic residues; that stretch reads PPGDKGEAGAHRNAK. Thr289 bears the Phosphothreonine mark. Phosphoserine is present on Ser299. Residues 321-336 are compositionally biased toward basic and acidic residues; the sequence is VETKRKDSILPERIGE. The region spanning 376–577 is the MIF4G domain; that stretch reads IEILNSMRNN…LEVIELHANS (202 aa).

This sequence belongs to the CTIF family. In terms of assembly, interacts with NCBP1/CBP80; the interaction is direct. Associates with the eukaryotic translation initiation factor 3 (eIF-3) complex. Widely expressed.

The protein localises to the cytoplasm. It localises to the perinuclear region. Its function is as follows. Specifically required for the pioneer round of mRNA translation mediated by the cap-binding complex (CBC), that takes place during or right after mRNA export via the nuclear pore complex (NPC). Acts via its interaction with the NCBP1/CBP80 component of the CBC complex and recruits the 40S small subunit of the ribosome via eIF3. In contrast, it is not involved in steady state translation, that takes place when the CBC complex is replaced by cytoplasmic cap-binding protein eIF4E. Also required for nonsense-mediated mRNA decay (NMD), the pioneer round of mRNA translation mediated by the cap-binding complex playing a central role in nonsense-mediated mRNA decay (NMD). In Homo sapiens (Human), this protein is CBP80/20-dependent translation initiation factor (CTIF).